Reading from the N-terminus, the 698-residue chain is MNNPLVNQAAMVLPVFLLSACLGGGGSFDLDSVDTEAPRPAPKYQDVSSEKPQAQKDQGGYGFAMRLKRRNWYRQANPKEDEIKLSENDWEQTDNGDIKNPSKQKNIINALTGNNGGASLQDSSQENQGISKVTGHHNFQYVWSGFFYKQIGSTFERKDSSITAARSGPDGYIFYKGKDPSRKLPVSGEVMYKGTWDFLTDVKTSQKFTDLGNTSTRPGDRYSAFSGELDYIVNKDSDKKDEHVGWGLTTEITVDFEKKTLSGKLIKNNRVNNDNDKHTTQYYSLDATLRGNRFSGKAEATDKPKNDGETKEHPFVSDSSSLSGGFFGPKGEELGFRFLSDDQKVAVVGSAKTQDKPRNGAVASGGAGAAASNGAAGTSSENSKLTTVLDAVELTLNDKKIKNLDNFSNAAQLVVDGIMIPLLPEASESGKNQANQGTNGGTAFTRKFNHTPKSDEKDTQAGTAENGNPAASNTAGDANGKTKTYEVEVCCSNLNYLKYGMLTRKNSKSAMQAGESSSQADAKTEQVGQSMFLQGERTDEKEIPNDQNVVYRGSWYGHIANGTSWSGNASDKEGGNRADFTVNFGTKKINGTLTADNRQAATFTIVGDIEGNGFSGTAKTADSGFDLDQSNNTRTPKAYITNAKVQGGFYGPKAEELGGWFAYSDDKQTKNATDASGNGNSASSATVVFGAKRQKPVQ.

An N-terminal signal peptide occupies residues 1-20 (MNNPLVNQAAMVLPVFLLSA). Cysteine 21 carries the N-palmitoyl cysteine lipid modification. A lipid anchor (S-diacylglycerol cysteine) is attached at cysteine 21. Disordered regions lie at residues 33 to 58 (VDTEAPRPAPKYQDVSSEKPQAQKDQ), 83 to 102 (IKLSENDWEQTDNGDIKNPS), 294 to 324 (FSGKAEATDKPKNDGETKEHPFVSDSSSLSG), 349 to 383 (GSAKTQDKPRNGAVASGGAGAAASNGAAGTSSENS), 428 to 479 (ESGK…GDAN), and 669 to 698 (TKNATDASGNGNSASSATVVFGAKRQKPVQ). Residues 46-56 (DVSSEKPQAQK) are compositionally biased toward polar residues. The segment covering 299 to 315 (EATDKPKNDGETKEHPF) has biased composition (basic and acidic residues). Over residues 369 to 383 (AAASNGAAGTSSENS) the composition is skewed to low complexity. Positions 460–476 (QAGTAENGNPAASNTAG) are enriched in polar residues. Residues 671 to 686 (NATDASGNGNSASSAT) show a composition bias toward low complexity.

It belongs to the TbpB family. In terms of assembly, binds only human holo-transferrin (TF), via the TF C-terminus. Forms a large complex with TbpA and TF. Interacts via its C-terminal domain with Slam1.

The protein resides in the cell outer membrane. Its subcellular location is the cell surface. Functionally, neisseria acquires iron by extracting it from serum transferrin (TF) in its human host. Acts as a TF receptor and is required for TF utilization. Involved in the initial capture of TF. Helps select only those TF molecules that can be used as an iron source and concentrates them on the cell surface, maintaining the iron-loaded status of the TF C-terminal lobe until its delivery to TbpA. In Neisseria meningitidis serogroup A / serotype 4A (strain DSM 15465 / Z2491), this protein is Transferrin-binding protein B.